Here is a 132-residue protein sequence, read N- to C-terminus: Fumarate reductase subunit C (132 aa).

Transmembrane regions (helical) follow at residues 30-50 (ATSV…LCFA), 70-90 (IVVF…VTYF), and 110-130 (VVRN…LVLV).

Belongs to the FrdC family. Part of an enzyme complex containing four subunits: a flavoprotein (FrdA), an iron-sulfur protein (FrdB), and two hydrophobic anchor proteins (FrdC and FrdD).

It localises to the cell inner membrane. Anchors the catalytic components of the fumarate reductase complex to the cell membrane, binds quinones. In Haemophilus influenzae (strain ATCC 51907 / DSM 11121 / KW20 / Rd), this protein is Fumarate reductase subunit C.